The sequence spans 237 residues: Thiamine-phosphate synthase (237 aa).

Residues 57 to 61 and N98 contribute to the 4-amino-2-methyl-5-(diphosphooxymethyl)pyrimidine site; that span reads QLRDK. Mg(2+) is bound by residues D99 and D118. Position 136 (S136) interacts with 4-amino-2-methyl-5-(diphosphooxymethyl)pyrimidine. 162–164 is a binding site for 2-[(2R,5Z)-2-carboxy-4-methylthiazol-5(2H)-ylidene]ethyl phosphate; sequence TPT. K165 is a binding site for 4-amino-2-methyl-5-(diphosphooxymethyl)pyrimidine. G193 is a 2-[(2R,5Z)-2-carboxy-4-methylthiazol-5(2H)-ylidene]ethyl phosphate binding site.

It belongs to the thiamine-phosphate synthase family. Requires Mg(2+) as cofactor.

The enzyme catalyses 2-[(2R,5Z)-2-carboxy-4-methylthiazol-5(2H)-ylidene]ethyl phosphate + 4-amino-2-methyl-5-(diphosphooxymethyl)pyrimidine + 2 H(+) = thiamine phosphate + CO2 + diphosphate. It catalyses the reaction 2-(2-carboxy-4-methylthiazol-5-yl)ethyl phosphate + 4-amino-2-methyl-5-(diphosphooxymethyl)pyrimidine + 2 H(+) = thiamine phosphate + CO2 + diphosphate. The catalysed reaction is 4-methyl-5-(2-phosphooxyethyl)-thiazole + 4-amino-2-methyl-5-(diphosphooxymethyl)pyrimidine + H(+) = thiamine phosphate + diphosphate. Its pathway is cofactor biosynthesis; thiamine diphosphate biosynthesis; thiamine phosphate from 4-amino-2-methyl-5-diphosphomethylpyrimidine and 4-methyl-5-(2-phosphoethyl)-thiazole: step 1/1. Its function is as follows. Condenses 4-methyl-5-(beta-hydroxyethyl)thiazole monophosphate (THZ-P) and 2-methyl-4-amino-5-hydroxymethyl pyrimidine pyrophosphate (HMP-PP) to form thiamine monophosphate (TMP). The chain is Thiamine-phosphate synthase from Mycolicibacterium gilvum (strain PYR-GCK) (Mycobacterium gilvum (strain PYR-GCK)).